The following is a 350-amino-acid chain: Geranylgeranyl pyrophosphate synthase (350 aa).

Residues Lys66, Arg69, and His98 each contribute to the isopentenyl diphosphate site. Mg(2+) contacts are provided by Asp105 and Asp109. Residue Arg114 participates in dimethylallyl diphosphate binding. Position 115 (Arg115) interacts with isopentenyl diphosphate. Residues Lys200, Thr201, Gln236, Asn243, and Lys263 each contribute to the dimethylallyl diphosphate site.

This sequence belongs to the FPP/GGPP synthase family. It depends on Mg(2+) as a cofactor.

The enzyme catalyses isopentenyl diphosphate + dimethylallyl diphosphate = (2E)-geranyl diphosphate + diphosphate. It catalyses the reaction isopentenyl diphosphate + (2E)-geranyl diphosphate = (2E,6E)-farnesyl diphosphate + diphosphate. The catalysed reaction is isopentenyl diphosphate + (2E,6E)-farnesyl diphosphate = (2E,6E,10E)-geranylgeranyl diphosphate + diphosphate. Its pathway is secondary metabolite biosynthesis; terpenoid biosynthesis. Geranylgeranyl pyrophosphate synthase; part of the gene cluster that mediates the biosynthesis of pleuromutilin, a tricyclic diterpene showing antibacterial properties. The geranylgeranyl diphosphate (GGPP) synthase catalyzes the first step in pleuromutilin biosynthesis. GGPP is then substrate of the premutilin synthase (PS) to yield premutilin. Premutilin synthase is a bifunctional enzyme composed of the fusion of a class II diterpene cyclase (DTC) and a class I diterpene synthase (DTS), with the corresponding domains and active sites containing characteristic aspartate-rich motifs. GGPP is first converted to mutildienyl-diphosphate (MPP) at the class II DTC site. MPP is subsequently further cyclized at the class I DTS site, followed by a 1,5-hydride shift and addition of water prior to terminating deprotonation, to yield premutilin. In addition to the aforementioned GGPP synthase and bifunctional diterpene synthase, the cluster also contains three cytochrome P450 monooxygenases, a short-chain alcohol dehydrogenase, and an acyltransferase, involved in the conversion of premutilin to pleuromutilin. The cytochrome P450 monooxygenases P450-1 and P450-2 hydroxylate premutilin at C-11 and C-3, respectively, producing 11-hydroxypremutilin and 3-hydroxypremutilin. The combination of the actions of both ple5 and ple6 leads to the production of 3,11-dihydroxypremutilin. The short chain dehydrogenase SDR further converts 3,11-dihydroxypremutilin into mutilin. The acetyltransferase ATF then acetylates mutilin to produce 14-O-acetylmutilin. Finally, the cytochrome P450 monooxygenase P450-3 catalyzes hydroxylation on the alpha position of the acetyl side chain of 14-O-acetylmutilin to yield pleuromutilin. In Clitopilus passeckerianus (Pleurotus passeckerianus), this protein is Geranylgeranyl pyrophosphate synthase.